Reading from the N-terminus, the 346-residue chain is Very-long-chain 3-oxoacyl-CoA reductase (346 aa).

Residues 19–39 (VLLGALLVGVFKLTVFILSVT) form a helical membrane-spanning segment. NADP(+) contacts are provided by Val65, Asp119, Asn146, Tyr220, Lys224, Val253, and Ser255. The Proton donor role is filled by Tyr220. The active-site Lowers pKa of active site Tyr is the Lys224.

It belongs to the short-chain dehydrogenases/reductases (SDR) family.

Its subcellular location is the endoplasmic reticulum membrane. The catalysed reaction is a very-long-chain (3R)-3-hydroxyacyl-CoA + NADP(+) = a very-long-chain 3-oxoacyl-CoA + NADPH + H(+). Its pathway is lipid metabolism; fatty acid biosynthesis. Functionally, component of the microsomal membrane bound fatty acid elongation system, which produces the 26-carbon very long-chain fatty acids (VLCFA) from palmitate. Catalyzes the reduction of the 3-ketoacyl-CoA intermediate that is formed in each cycle of fatty acid elongation. VLCFAs serve as precursors for ceramide and sphingolipids. This is Very-long-chain 3-oxoacyl-CoA reductase from Scheffersomyces stipitis (strain ATCC 58785 / CBS 6054 / NBRC 10063 / NRRL Y-11545) (Yeast).